The sequence spans 106 residues: Gibberellin-regulated protein 12 (106 aa).

The signal sequence occupies residues 1-22; the sequence is MMKLIVVFVISSLLFATQFSNG.

This sequence belongs to the GASA family. In terms of processing, six disulfide bonds may be present.

The protein resides in the secreted. Functionally, gibberellin-regulated protein that may function in hormonal controlled steps of development such as seed germination, flowering and seed maturation. This is Gibberellin-regulated protein 12 (GASA12) from Arabidopsis thaliana (Mouse-ear cress).